The primary structure comprises 145 residues: uncharacterized protein (145 aa).

The helical transmembrane segment at 63 to 83 (FLCLPLFLSFLVANLILWLSF) threads the bilayer.

Its subcellular location is the mitochondrion membrane. This is an uncharacterized protein from Arabidopsis thaliana (Mouse-ear cress).